Here is a 760-residue protein sequence, read N- to C-terminus: Transglutaminase-activating metalloprotease (760 aa).

The N-terminal stretch at 1-33 is a signal peptide; the sequence is MRPTPQRRAVATGALVAVTAMLAVGVQTTSANA. Disordered regions lie at residues 32-59 and 228-265; these read NAGQ…PVKL and KQGT…KTYN. The propeptide occupies 34-229; the sequence is GQDKAAHPAP…KLFEFQGVKQ (196 aa). The span at 228-257 shows a compositional bias: polar residues; that stretch reads KQGTGNSQHSGQVQIGTTKSGSSYQMNDTT. Residue H366 participates in Zn(2+) binding. E367 is an active-site residue. Positions 370 and 390 each coordinate Zn(2+). H454 functions as the Proton donor in the catalytic mechanism. The 121-residue stretch at 640-760 folds into the P/Homo B domain; it reads TVNTTGGGSV…GTIDKWRLTF (121 aa).

Belongs to the peptidase M4 family. Requires Zn(2+) as cofactor.

The protein localises to the secreted. Functionally, cleaves the N-terminal propeptide of transglutaminase thus activating it. This chain is Transglutaminase-activating metalloprotease, found in Streptomyces mobaraensis (Streptoverticillium mobaraense).